Here is a 1420-residue protein sequence, read N- to C-terminus: DNA-directed RNA polymerase subunit beta' (1420 aa).

Cys71, Cys73, Cys86, and Cys89 together coordinate Zn(2+). Positions 461, 463, and 465 each coordinate Mg(2+). 4 residues coordinate Zn(2+): Cys815, Cys889, Cys896, and Cys899.

This sequence belongs to the RNA polymerase beta' chain family. The RNAP catalytic core consists of 2 alpha, 1 beta, 1 beta' and 1 omega subunit. When a sigma factor is associated with the core the holoenzyme is formed, which can initiate transcription. Mg(2+) is required as a cofactor. The cofactor is Zn(2+).

It carries out the reaction RNA(n) + a ribonucleoside 5'-triphosphate = RNA(n+1) + diphosphate. DNA-dependent RNA polymerase catalyzes the transcription of DNA into RNA using the four ribonucleoside triphosphates as substrates. The polypeptide is DNA-directed RNA polymerase subunit beta' (Histophilus somni (strain 2336) (Haemophilus somnus)).